A 467-amino-acid polypeptide reads, in one-letter code: ADAM DEC1 (467 aa).

Positions 1-33 (MLPGTSRLPTEASMSWVLLSVLWLIIQIQVIDA) are cleaved as a signal peptide. Positions 34-208 (TLTPELKPHE…LRTSRSLKNP (175 aa)) are excised as a propeptide. Asn61 and Asn236 each carry an N-linked (GlcNAc...) asparagine glycan. The Peptidase M12B domain maps to 217 to 411 (KYIGLFLVLD…RNARCLLLAP (195 aa)). 2 cysteine pairs are disulfide-bonded: Cys327–Cys406 and Cys368–Cys373. His351 contributes to the Zn(2+) binding site. The active site involves Glu352. Zn(2+) is bound by residues His355 and Asp361. In terms of domain architecture, Disintegrin spans 418-467 (KPTCGNQVLDVGEECDCGSPEECTNLCCEPLTCRLKSQPDCSEASNHITE).

It depends on Zn(2+) as a cofactor. In terms of tissue distribution, expressed highly in uterus during pregnancy.

It localises to the secreted. Its function is as follows. May play an important role in the control of the immune response and during pregnancy. This is ADAM DEC1 (Adamdec1) from Mus musculus (Mouse).